Here is a 258-residue protein sequence, read N- to C-terminus: Phosphate import ATP-binding protein PstB (258 aa).

The ABC transporter domain occupies 12–253 (LEVKNLNFYY…PARKETEDYI (242 aa)). An ATP-binding site is contributed by 44-51 (GPSGCGKS).

This sequence belongs to the ABC transporter superfamily. Phosphate importer (TC 3.A.1.7) family. As to quaternary structure, the complex is composed of two ATP-binding proteins (PstB), two transmembrane proteins (PstC and PstA) and a solute-binding protein (PstS).

The protein localises to the cell inner membrane. It catalyses the reaction phosphate(out) + ATP + H2O = ADP + 2 phosphate(in) + H(+). In terms of biological role, part of the ABC transporter complex PstSACB involved in phosphate import. Responsible for energy coupling to the transport system. This chain is Phosphate import ATP-binding protein PstB, found in Bordetella pertussis (strain Tohama I / ATCC BAA-589 / NCTC 13251).